The following is a 285-amino-acid chain: Probable endonuclease 4 (285 aa).

Zn(2+) is bound by residues His-69, His-109, Glu-145, Asp-179, His-182, His-216, Asp-229, His-231, and Glu-261.

This sequence belongs to the AP endonuclease 2 family. It depends on Zn(2+) as a cofactor.

It catalyses the reaction Endonucleolytic cleavage to 5'-phosphooligonucleotide end-products.. Endonuclease IV plays a role in DNA repair. It cleaves phosphodiester bonds at apurinic or apyrimidinic (AP) sites, generating a 3'-hydroxyl group and a 5'-terminal sugar phosphate. In Citrobacter koseri (strain ATCC BAA-895 / CDC 4225-83 / SGSC4696), this protein is Probable endonuclease 4.